Reading from the N-terminus, the 228-residue chain is DNA mismatch repair protein MutH (228 aa).

The protein belongs to the MutH family.

The protein resides in the cytoplasm. Functionally, sequence-specific endonuclease that cleaves unmethylated GATC sequences. It is involved in DNA mismatch repair. This Yersinia pseudotuberculosis serotype IB (strain PB1/+) protein is DNA mismatch repair protein MutH.